Consider the following 668-residue polypeptide: Auxilin-like clathrin uncoating factor SWA2 (668 aa).

Residues 1 to 95 (MSDPFAHLLT…ANNTPPSALA (95 aa)) form a disordered region. Positions 1–100 (MSDPFAHLLT…PSALANTDDD (100 aa)) are CB1. Polar residues predominate over residues 17 to 36 (SASASKETTPQSSNSPSITG). A phosphoserine mark is found at Ser52 and Ser64. Residues 76–92 (PTNSTTKSNTANNTPPS) show a composition bias toward low complexity. The UBA domain occupies 140 to 180 (DEVKDMEIARLMSLGLSIEEATEFYENDVTYERYLEILKSK). The segment at 238–302 (EANDRLNNYS…FETKIDITKR (65 aa)) is CB2. A phosphoserine mark is found at Ser264, Ser308, and Ser312. Disordered regions lie at residues 302 to 323 (RTAP…EENS) and 339 to 359 (EGNL…ENSN). The segment at 303 to 362 (TAPDVSHSSSPTSGILIEENSRRNEPLIEDSLLDFSEGNLTNSKSNEDSTLFNENSNTDS) is CB3. Residues 340-359 (GNLTNSKSNEDSTLFNENSN) show a composition bias toward polar residues. TPR repeat units lie at residues 374–407 (YNEF…LPLN), 412–445 (IIAL…FPSS), and 467–500 (PKIM…NFFD). Positions 511–556 (QDFINPPPVKKSMPVKKKTTTTSPATKKQNLTASSSNSPISVDSTS) are disordered. Residues 539-555 (QNLTASSSNSPISVDST) show a composition bias toward polar residues. One can recognise a J domain in the interval 603–668 (CNWKDVSMQD…DKFKLQNDIN (66 aa)).

As to quaternary structure, interacts with the clathrin light and heavy chains CLC1 and CHC1, respectively. Binds to clathrin with its N-terminal domain containing 3 clathrin-binding (CB) motifs. Association with clathrin is transient. Binds to polyubiquitin and ubiquitinated proteins.

It localises to the cytoplasm. It is found in the endoplasmic reticulum membrane. Its function is as follows. Cofactor for the uncoating of clathrin-coated vesicles (CCVs) by Hsp70-type chaperones (SSA1/2/3 and SSB1/2). Coat disassembly is important for fusion of vesicles with target membranes and for recycling components of clathrin coats to the cytoplasm for further rounds of vesicle formation. Binds to assembled clathrin and recruits the ATP-activated chaperone to CCVs. Stimulates the ATPase activity of the clathrin-associated Hsp70-type chaperone SSA1, which then disrupts clathrin-clathrin interactions, leading to release of the clathrin coat. In addition, prevents unproductive clathrin assembly in the cell. Also required for cortical endoplasmic reticulum inheritance. The chain is Auxilin-like clathrin uncoating factor SWA2 (SWA2) from Saccharomyces cerevisiae (strain ATCC 204508 / S288c) (Baker's yeast).